A 359-amino-acid chain; its full sequence is Agropine synthesis conjugase (359 aa).

The SIS domain maps to 28-171 (TVAKFGRATA…IGGILNEREN (144 aa)).

This chain is Agropine synthesis conjugase (mas2), found in Rhizobium rhizogenes (Agrobacterium rhizogenes).